Consider the following 180-residue polypeptide: Ribulose bisphosphate carboxylase small subunit, chloroplastic (180 aa).

Residues Met1–Gln57 constitute a chloroplast transit peptide.

Belongs to the RuBisCO small chain family. Heterohexadecamer of 8 large and 8 small subunits.

It is found in the plastid. The protein localises to the chloroplast. RuBisCO catalyzes two reactions: the carboxylation of D-ribulose 1,5-bisphosphate, the primary event in carbon dioxide fixation, as well as the oxidative fragmentation of the pentose substrate. Both reactions occur simultaneously and in competition at the same active site. Although the small subunit is not catalytic it is essential for maximal activity. In Musa acuminata (Banana), this protein is Ribulose bisphosphate carboxylase small subunit, chloroplastic.